We begin with the raw amino-acid sequence, 586 residues long: BTB/POZ domain and ankyrin repeat-containing protein NPR1 (586 aa).

The BTB domain maps to 63-139 (SDADIVVEGI…VYTGKLKPSP (77 aa)). The C2HC NPR-type zinc finger occupies 142-156 (VSTCVHNVCAHDACR). Zn(2+) is bound by residues C145, C150, H152, and C155. ANK repeat units lie at residues 266-296 (KRIR…TLDE), 298-325 (NALH…DVNL), and 329-358 (RGYT…RASE). Positions 388-522 (EANKDRICID…LDKFIDDDLP (135 aa)) are salicylic acid-binding core (SBC). Salicylate is bound at residue R433. The segment at 561-586 (NLSGLSSSSSTTSPEKIGANQKVREP) is disordered. Residues 562–573 (LSGLSSSSSTTS) show a composition bias toward low complexity.

The protein belongs to the plant 'ANKYRIN-BTB/POZ' family. 'NPR1-like' subfamily. In terms of tissue distribution, highly expressed in leaves. Expressed at low levels in roots and stems.

It is found in the cytoplasm. It localises to the nucleus. The protein resides in the nuclear body. The protein operates within protein modification; protein ubiquitination. Its function is as follows. Salicylic acid (SA)-binding substrate-specific adapter of an E3 ubiquitin-protein ligase complex (CUL3-RBX1-BTB) which mediates the ubiquitination and subsequent proteasomal degradation of target proteins. Transcription cofactor that represses gene expression in the absence of salicylic acid (SA), when attached to negative cis-elements (W-box) with WRKY transcription factors, but stimulates gene expression upon activation by SA, when sumoylated and attached to positive cis-elements (as-1) with TGA transcription factors, thus confering immunity through a series of gene regulations ending in a significant increase in antimicrobial and defense genes expression. Probable component of the salicylic acid (SA) defense signaling pathway and pathogen-induced systemic acquired resistance (SAR). May be involved in disease resistance against fungal pathogens. May be involved in tolerance to salt and osmotic stresses. In Malus hupehensis (Chinese crab apple), this protein is BTB/POZ domain and ankyrin repeat-containing protein NPR1.